A 101-amino-acid chain; its full sequence is Small ribosomal subunit protein uS14 (101 aa).

Belongs to the universal ribosomal protein uS14 family. In terms of assembly, part of the 30S ribosomal subunit. Contacts proteins S3 and S10.

Binds 16S rRNA, required for the assembly of 30S particles and may also be responsible for determining the conformation of the 16S rRNA at the A site. The polypeptide is Small ribosomal subunit protein uS14 (Psychromonas ingrahamii (strain DSM 17664 / CCUG 51855 / 37)).